We begin with the raw amino-acid sequence, 401 residues long: Beta-ketoadipyl-CoA thiolase (401 aa).

The active-site Acyl-thioester intermediate is cysteine 91. Catalysis depends on proton acceptor residues histidine 357 and cysteine 387.

It belongs to the thiolase-like superfamily. Thiolase family.

It carries out the reaction succinyl-CoA + acetyl-CoA = 3-oxoadipyl-CoA + CoA. The protein operates within aromatic compound metabolism; beta-ketoadipate pathway; acetyl-CoA and succinyl-CoA from 3-oxoadipate: step 2/2. Functionally, catalyzes thiolytic cleavage of beta-ketoadipyl-CoA to succinyl-CoA and acetyl-CoA. The protein is Beta-ketoadipyl-CoA thiolase (pcaF) of Pseudomonas aeruginosa (strain ATCC 15692 / DSM 22644 / CIP 104116 / JCM 14847 / LMG 12228 / 1C / PRS 101 / PAO1).